A 252-amino-acid polypeptide reads, in one-letter code: Bridging integrator 3 homolog (252 aa).

Residues 8–231 form the BAR domain; it reads GGPKKQIVPK…VDEVQLSDAE (224 aa). 3 coiled-coil regions span residues 17-57, 119-150, and 224-244; these read KTVE…MSKS, SLNMAVKRREQALQDYKRLQTKVEKYEEKDKT, and EVQLSDAEREQENEARLAELR.

The protein resides in the cytoplasm. It localises to the cytoskeleton. In terms of biological role, involved in cytokinesis and septation where it has a role in the localization of F-actin. The chain is Bridging integrator 3 homolog (bin3) from Xenopus laevis (African clawed frog).